We begin with the raw amino-acid sequence, 415 residues long: Phosphoribosylamine--glycine ligase (415 aa).

Residues 108 to 311 (KKIMEKYNIP…LMQHIIDLDE (204 aa)) enclose the ATP-grasp domain. 134–191 (IENCEFPVVVKKDGLAAGKGVIIADTIEAARSAIEIMYGDEEEGTVVFETFLEGEEFS) is a binding site for ATP. Mg(2+) is bound by residues Glu281 and Asn283.

This sequence belongs to the GARS family. Mg(2+) serves as cofactor. The cofactor is Mn(2+).

It catalyses the reaction 5-phospho-beta-D-ribosylamine + glycine + ATP = N(1)-(5-phospho-beta-D-ribosyl)glycinamide + ADP + phosphate + H(+). It functions in the pathway purine metabolism; IMP biosynthesis via de novo pathway; N(1)-(5-phospho-D-ribosyl)glycinamide from 5-phospho-alpha-D-ribose 1-diphosphate: step 2/2. The polypeptide is Phosphoribosylamine--glycine ligase (Staphylococcus aureus (strain MRSA252)).